The chain runs to 238 residues: Purine nucleoside phosphorylase DeoD-type (238 aa).

His-4 serves as a coordination point for a purine D-ribonucleoside. Phosphate-binding positions include Gly-20, Arg-24, Arg-43, and 87–90 (RVGS). Residues 179–181 (EME) and 203–204 (SD) each bind a purine D-ribonucleoside. Asp-204 acts as the Proton donor in catalysis.

It belongs to the PNP/UDP phosphorylase family. Homohexamer; trimer of homodimers.

It catalyses the reaction a purine D-ribonucleoside + phosphate = a purine nucleobase + alpha-D-ribose 1-phosphate. The enzyme catalyses a purine 2'-deoxy-D-ribonucleoside + phosphate = a purine nucleobase + 2-deoxy-alpha-D-ribose 1-phosphate. In terms of biological role, catalyzes the reversible phosphorolytic breakdown of the N-glycosidic bond in the beta-(deoxy)ribonucleoside molecules, with the formation of the corresponding free purine bases and pentose-1-phosphate. In Haemophilus influenzae (strain PittGG), this protein is Purine nucleoside phosphorylase DeoD-type.